Reading from the N-terminus, the 443-residue chain is MFLAQEIIRKKRNGLALSPAEIQFFVQGITTNAVSEGQIAAFGMAVYFNDMNMDERIALTTAMRDSGTVLNWQSLGLNGPVIDKHSTGGVGDVISLMLGPMAAACGGYVPMISGRGLGHTGGTLDKFDAIPGYQTEPSSELFRKVVKEVGVAIIGQTGDLVPADKRFYSIRDNTATVESISLITASILSKKLACNLDALAMDVKVGSGAFMPTYEASEELARSITAVANGAGTKTTALLTDMNQVLASCAGNAVEVKEAIDFLTGAYRNPRLYEVTMGLCAEMLLLGGLASNETEARAKLNRVLDNGRAAEIFGKMVSGLGGPVDFVENYSKYLPQSQIIRPVFADAKGYAYSMDTRELGLAVVTLGGGRRKPGDALDYSVGLTQVCALGDKIDSSTPIAVIHAQSEAAFTEAENAVKKAIHIGETAPEKTPEIYAYIRAADL.

Belongs to the thymidine/pyrimidine-nucleoside phosphorylase family. As to quaternary structure, homodimer.

The enzyme catalyses thymidine + phosphate = 2-deoxy-alpha-D-ribose 1-phosphate + thymine. It participates in pyrimidine metabolism; dTMP biosynthesis via salvage pathway; dTMP from thymine: step 1/2. Its function is as follows. The enzymes which catalyze the reversible phosphorolysis of pyrimidine nucleosides are involved in the degradation of these compounds and in their utilization as carbon and energy sources, or in the rescue of pyrimidine bases for nucleotide synthesis. The protein is Thymidine phosphorylase of Shewanella putrefaciens (strain CN-32 / ATCC BAA-453).